The primary structure comprises 517 residues: Ribonuclease Y (517 aa).

A helical membrane pass occupies residues 1 to 21; the sequence is MIEVVVGIGAGLIGIGAGYLV. A KH domain is found at 207-273; it reads LINVVNIKND…TRVIELLVED (67 aa). The HD domain occupies 333–426; the sequence is ALAHSLEVAH…VCAADALSAA (94 aa).

This sequence belongs to the RNase Y family.

The protein resides in the cell membrane. Its function is as follows. Endoribonuclease that initiates mRNA decay. The polypeptide is Ribonuclease Y (Campylobacter fetus subsp. fetus (strain 82-40)).